The sequence spans 330 residues: Negative regulator of the PHO system (330 aa).

A Protein kinase domain is found at 8–290 (FQQLEKLGEG…ARQALQHPWF (283 aa)). ATP contacts are provided by residues 14-22 (LGEGTYATV) and Lys37. Asp131 serves as the catalytic Proton acceptor. The segment at 300-330 (MQHLADPYQQSQQQSQQQAQQSQQMDPQTYR) is disordered. Positions 308–323 (QQSQQQSQQQAQQSQQ) are enriched in low complexity.

This sequence belongs to the protein kinase superfamily. CMGC Ser/Thr protein kinase family. CDC2/CDKX subfamily. Interacts with a number of cyclins.

It catalyses the reaction L-seryl-[protein] + ATP = O-phospho-L-seryl-[protein] + ADP + H(+). The catalysed reaction is L-threonyl-[protein] + ATP = O-phospho-L-threonyl-[protein] + ADP + H(+). Functionally, when phosphate concentrations are high it phosphorylates the PHO4 transcription factor thus establishing repression. This is Negative regulator of the PHO system (PHO85) from Debaryomyces hansenii (strain ATCC 36239 / CBS 767 / BCRC 21394 / JCM 1990 / NBRC 0083 / IGC 2968) (Yeast).